The sequence spans 740 residues: E3 ubiquitin-protein ligase WAV3 (740 aa).

The disordered stretch occupies residues 14-105 (PRNSDAAAPD…AISNPSSPRS (92 aa)). The segment covering 49–67 (SGGSNPSTPRSTSSPSLRC) has biased composition (low complexity). The segment covering 71-90 (DAQTPTAEQTSTPRSATKSP) has biased composition (polar residues). The segment at 122-167 (CGICLNSVKTGQGTAKYTAECSHAFHFPCIADYVRKQGKLVCPVCN) adopts an RING-type; atypical zinc-finger fold. The 145-residue stretch at 332–476 (DLVVVVDVGG…IPVTEHGFGE (145 aa)) folds into the VWFA domain. Positions 677–709 (QSQHQQQHNQRRRGSERETTTTMTLMDENGEPL) are disordered.

Interacts with SINAT1, SINAT2, SINAT3, SINAT4, SINAT5, TOR1/SPR2 and FIP2. As to expression, expressed in root tips and leaf primordia.

The enzyme catalyses S-ubiquitinyl-[E2 ubiquitin-conjugating enzyme]-L-cysteine + [acceptor protein]-L-lysine = [E2 ubiquitin-conjugating enzyme]-L-cysteine + N(6)-ubiquitinyl-[acceptor protein]-L-lysine.. Its function is as follows. E3 ubiquitin-protein ligase involved in the regulation of root growth. Acts as a positive regulator of root gravitropism. Possesses E3 protein ligase activity in vitro. This chain is E3 ubiquitin-protein ligase WAV3, found in Arabidopsis thaliana (Mouse-ear cress).